A 191-amino-acid polypeptide reads, in one-letter code: Large ribosomal subunit protein eL6 (191 aa).

The protein belongs to the eukaryotic ribosomal protein eL6 family.

The chain is Large ribosomal subunit protein eL6 (RPL6) from Tetrahymena thermophila (strain SB210).